A 381-amino-acid chain; its full sequence is Tetraacyldisaccharide 4'-kinase (381 aa).

78–85 serves as a coordination point for ATP; it reads AVGGTGKT.

This sequence belongs to the LpxK family.

The enzyme catalyses a lipid A disaccharide + ATP = a lipid IVA + ADP + H(+). Its pathway is glycolipid biosynthesis; lipid IV(A) biosynthesis; lipid IV(A) from (3R)-3-hydroxytetradecanoyl-[acyl-carrier-protein] and UDP-N-acetyl-alpha-D-glucosamine: step 6/6. Transfers the gamma-phosphate of ATP to the 4'-position of a tetraacyldisaccharide 1-phosphate intermediate (termed DS-1-P) to form tetraacyldisaccharide 1,4'-bis-phosphate (lipid IVA). In Syntrophobacter fumaroxidans (strain DSM 10017 / MPOB), this protein is Tetraacyldisaccharide 4'-kinase.